Consider the following 182-residue polypeptide: Large ribosomal subunit protein uL5 (182 aa).

The protein belongs to the universal ribosomal protein uL5 family. As to quaternary structure, part of the 50S ribosomal subunit; part of the 5S rRNA/L5/L18/L25 subcomplex. Contacts the 5S rRNA and the P site tRNA. Forms a bridge to the 30S subunit in the 70S ribosome.

Functionally, this is one of the proteins that bind and probably mediate the attachment of the 5S RNA into the large ribosomal subunit, where it forms part of the central protuberance. In the 70S ribosome it contacts protein S13 of the 30S subunit (bridge B1b), connecting the 2 subunits; this bridge is implicated in subunit movement. Contacts the P site tRNA; the 5S rRNA and some of its associated proteins might help stabilize positioning of ribosome-bound tRNAs. The polypeptide is Large ribosomal subunit protein uL5 (Borreliella afzelii (strain PKo) (Borrelia afzelii)).